Here is a 165-residue protein sequence, read N- to C-terminus: uncharacterized protein (165 aa).

An N-terminal signal peptide occupies residues 1 to 25 (MKRVLFSVIVFTAVGFTFCQSKAHA).

This is an uncharacterized protein from Bacillus subtilis (strain 168).